A 208-amino-acid polypeptide reads, in one-letter code: Large ribosomal subunit protein uL4 (208 aa).

A disordered region spans residues 45 to 89; that stretch reads RQGTHAHKNRSAVSGGGKKPWRQKGTGRARQGSTRSPQWRGGGTV.

This sequence belongs to the universal ribosomal protein uL4 family. As to quaternary structure, part of the 50S ribosomal subunit.

In terms of biological role, one of the primary rRNA binding proteins, this protein initially binds near the 5'-end of the 23S rRNA. It is important during the early stages of 50S assembly. It makes multiple contacts with different domains of the 23S rRNA in the assembled 50S subunit and ribosome. Forms part of the polypeptide exit tunnel. The sequence is that of Large ribosomal subunit protein uL4 from Lactococcus lactis subsp. cremoris (strain MG1363).